A 146-amino-acid chain; its full sequence is Hydroxyproline-rich systemin (146 aa).

Residues 1 to 24 (MISFFRAFFLIIIISFLIFVGAQA) form the signal peptide. Residues 25 to 48 (RTLLGNYHDDEMLIELKLESGNYG) constitute a propeptide that is removed on maturation. The interval 47–128 (YGRTPYKTPP…PPPPKPQDEQ (82 aa)) is disordered. 6 positions are modified to 4-hydroxyproline: P51, P55, P56, P57, P58, and P63. O-linked (Ara...) hydroxyproline glycosylation is found at P51, P55, P56, P57, P58, and P63. A propeptide spanning residues 67-70 (EIVN) is cleaved from the precursor. 4-hydroxyproline occurs at positions 79, 80, and 82. 3 O-linked (Ara...) hydroxyproline glycosylation sites follow: P79, P80, and P82. Positions 86–110 (PIIGQLTTITTTPHHDDTVAAPPVG) are excised as a propeptide. A 4-hydroxyproline mark is found at P119, P120, P121, and P122. 4 O-linked (Ara...) hydroxyproline glycosylation sites follow: P119, P120, P121, and P122. Residues 131-146 (IIITSSSSTLPLQASY) constitute a propeptide that is removed on maturation.

In terms of processing, O-glycosylated; contains pentose side chains. As to expression, leaves.

It is found in the secreted. Its function is as follows. Activates a lipid-based signal transduction pathway in which linolenic acid is converted to jasmonic acid, a potent activator of defense gene transcription. Induces synthesis of proteinase inhibitors I and II in leaves when supplied through cut stems. This chain is Hydroxyproline-rich systemin, found in Solanum lycopersicum (Tomato).